We begin with the raw amino-acid sequence, 434 residues long: Eukaryotic peptide chain release factor subunit 1-2 (434 aa).

The residue at position 2 (A2) is an N-acetylalanine.

The protein belongs to the eukaryotic release factor 1 family. Heterodimer of two subunits, one of which binds GTP.

The protein resides in the cytoplasm. In terms of biological role, directs the termination of nascent peptide synthesis (translation) in response to the termination codons UAA, UAG and UGA. Modulates plant growth and development. The protein is Eukaryotic peptide chain release factor subunit 1-2 of Arabidopsis thaliana (Mouse-ear cress).